The sequence spans 70 residues: uncharacterized protein (70 aa).

Residues 21 to 43 form a C2H2-type zinc finger; the sequence is YECPICGEIYIKRKSMITHLRKH.

This is an uncharacterized protein from Saccharolobus islandicus (Sulfolobus islandicus).